The sequence spans 282 residues: Heme oxygenase 1, chloroplastic (282 aa).

Residues 1–56 (MASATVVSQIQSLYIIKPRLSPPPPPHRQFRSIYFPTTRLLQQHRFRQMKSVVIVP) constitute a chloroplast transit peptide. Histidine 86 serves as a coordination point for heme b.

It belongs to the heme oxygenase family. Highly expressed in root nodules and, to a lower extent, in leaves, shoots, roots, flowers and pods (at protein level).

The protein resides in the plastid. Its subcellular location is the chloroplast. The catalysed reaction is heme b + 3 reduced [NADPH--hemoprotein reductase] + 3 O2 = biliverdin IXalpha + CO + Fe(2+) + 3 oxidized [NADPH--hemoprotein reductase] + 3 H2O + H(+). Functionally, key enzyme in the synthesis of the chromophore of the phytochrome family of plant photoreceptors. Catalyzes the opening of the heme ring to form the open-chain tetrapyrrole biliverdin IX with the release of iron and carbon monoxide (CO). Produces specifically the biliverdin IX-alpha isomer. Can form complex with heme, is ferredoxin-dependent and its activity is increased in the presence of ascorbate. May affect the plastid-to-nucleus signaling pathway by perturbing tetrapyrrole synthesis. The plastid-to-nucleus signal plays an important role in the coordinated expression of both nuclear- and chloroplast-localized genes that encode photosynthesis-related proteins. Required for efficient symbiotic nitrogen fixation (SNF) in root nodules. Responsible for heme catabolism in uninfected nodule interstitial cells (UC), preventing superoxide production under stressful conditions (e.g. nitrate exposure and darkness) and catalyzing biliverdin (BV) production in senescing green nodules. The sequence is that of Heme oxygenase 1, chloroplastic from Lotus japonicus (Lotus corniculatus var. japonicus).